A 60-amino-acid chain; its full sequence is Myrmicitoxin(1)-Pr4c (60 aa).

The signal sequence occupies residues 1–23; sequence MKAIIFLFAVLTVVAIIIPIISG. The propeptide occupies 24–33; that stretch reads EPNAGPHAAS. Q59 is subject to Glutamine amide.

The protein belongs to the formicidae venom clade 2 family. Expressed by the venom gland.

The protein localises to the secreted. Toxin that causes a rapid and irreversible paralysis when intrathoracically injected into insects (blowflies). Does not cause spontaneous nocifensive behaviors by intraplantar injection in mice. This is Myrmicitoxin(1)-Pr4c from Pogonomyrmex rugosus (Desert harvester ant).